Reading from the N-terminus, the 398-residue chain is Stearoyl-[acyl-carrier-protein] 9-desaturase, chloroplastic (398 aa).

A chloroplast-targeting transit peptide spans 1–34 (MALKLNPLASQPYNFPSSARPPISTFRSPKFLCL). Residues E140, E178, H181, E231, E264, and H267 each coordinate Fe cation.

It belongs to the fatty acid desaturase type 2 family. As to quaternary structure, homodimer. The cofactor is Fe(2+).

It localises to the plastid. The protein resides in the chloroplast. It carries out the reaction octadecanoyl-[ACP] + 2 reduced [2Fe-2S]-[ferredoxin] + O2 + 2 H(+) = (9Z)-octadecenoyl-[ACP] + 2 oxidized [2Fe-2S]-[ferredoxin] + 2 H2O. Its pathway is lipid metabolism; fatty acid metabolism. Its function is as follows. Converts stearoyl-ACP to oleoyl-ACP by introduction of a cis double bond between carbons 9 and 10 of the acyl chain. The polypeptide is Stearoyl-[acyl-carrier-protein] 9-desaturase, chloroplastic (Brassica napus (Rape)).